The following is a 267-amino-acid chain: Transcription factor HES-1-A (267 aa).

Residues 1–43 (MPADVMEKNSSSPVAATPASVSNTPDKPKTASEHRKSSKPIME) are disordered. Low complexity predominate over residues 10 to 22 (SSSPVAATPASVS). Residues 26–35 (DKPKTASEHR) are compositionally biased toward basic and acidic residues. A bHLH domain is found at 34 to 91 (HRKSSKPIMEKRRRARINESLGQLKTLILDALKKDSSRHSKLEKADILEMTVKHLRNL). Positions 110–143 (YRAGFSECMNEVTRFLSTCEGVNTDVRTRLLGHL) constitute an Orange domain. Residues 264-267 (WRPW) carry the WRPW motif motif.

As to quaternary structure, transcription repression requires formation of a complex with a corepressor protein of the Groucho/TLE family. Interacts with the bHLH protein hes2, and binds DNA in the form of a heterodimer with the bHLH protein hey1/hrt1. Interacts with the bHLH protein hes6; this interaction may inhibit the transcriptional repressor activity. As to expression, starting from late neurula stage, weakly expressed in midline neural cells, where expression is restricted to the superficial layer of the prospective floorplate. Expressed in the posterior somitic mesoderm (PSM) at tailbud stage. During early tailbud stages, broadly expressed within the pronephric mesoderm both around and inside the developing pronephros. During late tailbud to early tadpole stages, expressed more ventrally in the pronephros, and although initially expressed in both the lateral and medial layers, by these later stages expression is predominantly in the lateral layer. Pronephric expression is no longer detectable in late tadpoles (stage 35).

It localises to the nucleus. Its function is as follows. Transcriptional repressor of a subset of early mesodermal genes including myod1 and t/bra. Binds DNA on N-box motifs: 5'-CACNAG-3'. Acts as a negative regulator of myogenesis, mediating Notch signaling to repress expression of myod1. This is Transcription factor HES-1-A (hes1-a) from Xenopus laevis (African clawed frog).